The primary structure comprises 652 residues: Threonine--tRNA ligase (652 aa).

The 61-residue stretch at 1-61 (MIKLKLPDGS…DRDAEVEIVT (61 aa)) folds into the TGS domain. The tract at residues 243–548 (DHRKIGREMD…LIENYEGRFP (306 aa)) is catalytic. 3 residues coordinate Zn(2+): C348, H399, and H525.

The protein belongs to the class-II aminoacyl-tRNA synthetase family. As to quaternary structure, homodimer. Requires Zn(2+) as cofactor.

It is found in the cytoplasm. It catalyses the reaction tRNA(Thr) + L-threonine + ATP = L-threonyl-tRNA(Thr) + AMP + diphosphate + H(+). Catalyzes the attachment of threonine to tRNA(Thr) in a two-step reaction: L-threonine is first activated by ATP to form Thr-AMP and then transferred to the acceptor end of tRNA(Thr). Also edits incorrectly charged L-seryl-tRNA(Thr). The protein is Threonine--tRNA ligase of Parvibaculum lavamentivorans (strain DS-1 / DSM 13023 / NCIMB 13966).